The sequence spans 721 residues: Glycine--tRNA ligase beta subunit (721 aa).

It belongs to the class-II aminoacyl-tRNA synthetase family. Tetramer of two alpha and two beta subunits.

The protein resides in the cytoplasm. It catalyses the reaction tRNA(Gly) + glycine + ATP = glycyl-tRNA(Gly) + AMP + diphosphate. The protein is Glycine--tRNA ligase beta subunit of Sinorhizobium fredii (strain NBRC 101917 / NGR234).